The primary structure comprises 161 residues: MRIRLVTVGKVKEKYLQDGVQEYLKRLRPYARVEIVTVPDEPIPDGASPAQEAQVMQREGERLLRALDQGGQEHVVVLDGRGKNFSSEELAAFLAERALHGDANLAFVIGGSLGLDPAVLARAGTTLSLGRMTFLHQMVPLILLEQIYRAFKINRGEKYHK.

Residues L78, G110, and 129 to 134 contribute to the S-adenosyl-L-methionine site; that span reads LGRMTF.

It belongs to the RNA methyltransferase RlmH family. Homodimer.

Its subcellular location is the cytoplasm. The enzyme catalyses pseudouridine(1915) in 23S rRNA + S-adenosyl-L-methionine = N(3)-methylpseudouridine(1915) in 23S rRNA + S-adenosyl-L-homocysteine + H(+). Specifically methylates the pseudouridine at position 1915 (m3Psi1915) in 23S rRNA. The protein is Ribosomal RNA large subunit methyltransferase H of Symbiobacterium thermophilum (strain DSM 24528 / JCM 14929 / IAM 14863 / T).